A 303-amino-acid polypeptide reads, in one-letter code: Aspartate carbamoyltransferase catalytic subunit (303 aa).

Carbamoyl phosphate-binding residues include arginine 54 and threonine 55. An L-aspartate-binding site is contributed by lysine 82. Residues arginine 104, histidine 132, and glutamine 135 each coordinate carbamoyl phosphate. L-aspartate is bound by residues arginine 165 and arginine 221. 2 residues coordinate carbamoyl phosphate: glycine 261 and proline 262.

It belongs to the aspartate/ornithine carbamoyltransferase superfamily. ATCase family. In terms of assembly, heterododecamer (2C3:3R2) of six catalytic PyrB chains organized as two trimers (C3), and six regulatory PyrI chains organized as three dimers (R2).

It carries out the reaction carbamoyl phosphate + L-aspartate = N-carbamoyl-L-aspartate + phosphate + H(+). Its pathway is pyrimidine metabolism; UMP biosynthesis via de novo pathway; (S)-dihydroorotate from bicarbonate: step 2/3. Catalyzes the condensation of carbamoyl phosphate and aspartate to form carbamoyl aspartate and inorganic phosphate, the committed step in the de novo pyrimidine nucleotide biosynthesis pathway. The protein is Aspartate carbamoyltransferase catalytic subunit of Koribacter versatilis (strain Ellin345).